The following is a 194-amino-acid chain: uncharacterized protein (194 aa).

The disordered stretch occupies residues 62–93 (GGAGRRTSKAQRVHPQPSHQRQPPPPQHPGPY).

In terms of tissue distribution, expressed most abundantly in the brain at protein level. Present in cortex, cerebellum and midbrain. Found in neurons. Elevated expressions detected in Alzheimer brain samples. Also expressed in testis.

Its subcellular location is the cytoplasm. This is an uncharacterized protein from Homo sapiens (Human).